Here is a 214-residue protein sequence, read N- to C-terminus: tRNA (guanine-N(7)-)-methyltransferase (214 aa).

S-adenosyl-L-methionine is bound by residues glutamate 43, glutamate 68, aspartate 95, and aspartate 117. The active site involves aspartate 117. Substrate contacts are provided by residues lysine 121, aspartate 153, and threonine 190 to glutamate 193.

Belongs to the class I-like SAM-binding methyltransferase superfamily. TrmB family.

The enzyme catalyses guanosine(46) in tRNA + S-adenosyl-L-methionine = N(7)-methylguanosine(46) in tRNA + S-adenosyl-L-homocysteine. The protein operates within tRNA modification; N(7)-methylguanine-tRNA biosynthesis. Its function is as follows. Catalyzes the formation of N(7)-methylguanine at position 46 (m7G46) in tRNA. This Staphylococcus haemolyticus (strain JCSC1435) protein is tRNA (guanine-N(7)-)-methyltransferase.